Consider the following 54-residue polypeptide: Ovomucoid (54 aa).

The Kazal-like domain occupies 4–54 (VDCSEYPKPACTLEYRPLCGSDSKTYGNKCNFCNAVVESNGTLTLSHFGKC). 3 disulfides stabilise this stretch: Cys-6-Cys-36, Cys-14-Cys-33, and Cys-22-Cys-54. Asn-43 carries an N-linked (GlcNAc...) asparagine glycan.

It is found in the secreted. The protein is Ovomucoid of Alectoris chukar (Chukar partridge).